The sequence spans 316 residues: Alkaline ceramidase YPC1 (316 aa).

Residues 1-36 are Lumenal-facing; sequence MGIFRWNYPESSVPGVWGETTSTIDWCEENYVVSPY. The cysteines at positions 27 and 219 are disulfide-linked. Residues 37 to 57 lie within the membrane without spanning it; that stretch reads IAEWSNTLTNSVFILSAIYTT. Residues 58-68 lie on the Lumenal side of the membrane; that stretch reads YSAYKNKLEKR. An intramembrane segment occupies 69-89; sequence FLLIGFGYGLVGVGSWLFHMT. Residues 90 to 93 lie on the Lumenal side of the membrane; the sequence is LKYR. The helical transmembrane segment at 94–114 threads the bilayer; the sequence is FQLLDELPMIYAMCIPTWSLV. Topologically, residues 115–135 are cytoplasmic; it reads CEAKEALLNGDNHKKVPLFEQ. The helical transmembrane segment at 136–156 threads the bilayer; it reads IFIGVIIGLAVTTASILYVIY. The Lumenal segment spans residues 157-160; sequence KNVD. The stretch at 161–181 is an intramembrane region; sequence IHQILFGVQIVVVAATAGSLT. Residues 182-195 lie on the Lumenal side of the membrane; that stretch reads YRYVHDPLAKRNLK. An intramembrane segment occupies 196-216; sequence ASMALGAILFLSGYISWLLDI. The Lumenal segment spans residues 217–228; sequence HYCSFWVHVRRS. Residues 229-249 traverse the membrane as a helical segment; the sequence is ILALPLGVLLEPHGWWHILTG. Residues 250–316 are Cytoplasmic-facing; it reads MGIYFYIVSL…DQSIEVKKEK (67 aa).

It belongs to the alkaline ceramidase family.

The protein localises to the endoplasmic reticulum membrane. It carries out the reaction N-hexanoyl-sphinganine + H2O = hexanoate + sphinganine. The catalysed reaction is sphinganine + hexadecanoate = N-hexadecanoylsphinganine + H2O. The enzyme catalyses N-hexadecanoyl-(4R)-hydroxysphinganine + H2O = (4R)-hydroxysphinganine + hexadecanoate. It catalyses the reaction N-hexadecanoylsphing-4-enine + H2O = sphing-4-enine + hexadecanoate. It carries out the reaction an N-acyl-(4R)-4-hydroxysphinganine + H2O = (4R)-hydroxysphinganine + a fatty acid. Its function is as follows. Alkaline ceramidase that hydrolyzes phytoceramide and also dihydroceramide into phytosphingosine or dihydrosphingosine. Prefers phytoceramide. Also has reverse activity as acyl-CoA-independent ceramide synthase, catalyzing synthesis of phytoceramide and dihydroceramide from palmitic acid and phytosphingosine or dihydrosphingosine. Is not responsible for the breakdown of unsaturated ceramide. Preferentially uses very long chain fatty acids (C-24 and C-26) in vivo compared to C-16 in vitro. The chain is Alkaline ceramidase YPC1 (YPC1) from Saccharomyces cerevisiae (strain ATCC 204508 / S288c) (Baker's yeast).